We begin with the raw amino-acid sequence, 238 residues long: DNA repair protein RecO (238 aa).

It belongs to the RecO family.

Involved in DNA repair and RecF pathway recombination. In Anaplasma marginale (strain Florida), this protein is DNA repair protein RecO.